We begin with the raw amino-acid sequence, 970 residues long: N-alpha-acetyltransferase 25, NatB auxiliary subunit (970 aa).

TPR repeat units follow at residues 11 to 44 (NDRR…HRDL), 45 to 78 (HCAK…EPTD), 79 to 112 (DNSL…VPNS), and 114 to 146 (EYHS…VPKN).

This sequence belongs to the MDM20/NAA25 family. In terms of assembly, component of the N-terminal acetyltransferase B (NatB) complex which is composed of NAA20 and NAA25.

The protein resides in the cytoplasm. Its function is as follows. Non-catalytic subunit of the NatB complex which catalyzes acetylation of the N-terminal methionine residues of peptides beginning with Met-Asp, Met-Glu, Met-Asn and Met-Gln. May play a role in normal cell-cycle progression. This Rattus norvegicus (Rat) protein is N-alpha-acetyltransferase 25, NatB auxiliary subunit (Naa25).